The chain runs to 455 residues: Gamma-glutamyl phosphate reductase (455 aa).

This sequence belongs to the gamma-glutamyl phosphate reductase family.

It localises to the cytoplasm. The enzyme catalyses L-glutamate 5-semialdehyde + phosphate + NADP(+) = L-glutamyl 5-phosphate + NADPH + H(+). Its pathway is amino-acid biosynthesis; L-proline biosynthesis; L-glutamate 5-semialdehyde from L-glutamate: step 2/2. Its function is as follows. Catalyzes the NADPH-dependent reduction of L-glutamate 5-phosphate into L-glutamate 5-semialdehyde and phosphate. The product spontaneously undergoes cyclization to form 1-pyrroline-5-carboxylate. The protein is Gamma-glutamyl phosphate reductase of Synechococcus sp. (strain JA-3-3Ab) (Cyanobacteria bacterium Yellowstone A-Prime).